A 140-amino-acid polypeptide reads, in one-letter code: ATP synthase epsilon chain (140 aa).

This sequence belongs to the ATPase epsilon chain family. In terms of assembly, F-type ATPases have 2 components, CF(1) - the catalytic core - and CF(0) - the membrane proton channel. CF(1) has five subunits: alpha(3), beta(3), gamma(1), delta(1), epsilon(1). CF(0) has three main subunits: a, b and c.

It is found in the cell inner membrane. Functionally, produces ATP from ADP in the presence of a proton gradient across the membrane. In Legionella pneumophila (strain Paris), this protein is ATP synthase epsilon chain.